The primary structure comprises 308 residues: Cyclin-D2-1 (308 aa).

A disordered region spans residues 286–308 (EGLSYDSSSPPPPKRRKRSPPGT). The segment covering 298–308 (PKRRKRSPPGT) has biased composition (basic residues).

It belongs to the cyclin family. Cyclin D subfamily.

In Oryza sativa subsp. japonica (Rice), this protein is Cyclin-D2-1 (CYCD2-1).